A 761-amino-acid chain; its full sequence is Spindle assembly abnormal protein 4 (761 aa).

The span at 1–11 (MLPSENGDEDQ) shows a compositional bias: acidic residues. The disordered stretch occupies residues 1–109 (MLPSENGDED…SNERREEDNV (109 aa)). The segment covering 51–62 (TPTNSAPSSART) has biased composition (polar residues). Positions 90-106 (ESHDSGNRSESNERREE) are enriched in basic and acidic residues. Positions 129-156 (ETCSKVSEEATQLRAEADRITAQANFIN) form a coiled coil. The segment covering 164-173 (TPSSYSSNIS) has biased composition (low complexity). 2 disordered regions span residues 164–228 (TPSS…QARP) and 252–280 (PRRQPMLPAHHHPSQKENVPERKAPSEHV). Residues 210–223 (QTLSSLASSGSLDT) are compositionally biased toward polar residues. Residues 265–280 (SQKENVPERKAPSEHV) are compositionally biased toward basic and acidic residues. Residues 326–464 (RKKQEEAYAK…EKDDREKEMF (139 aa)) adopt a coiled-coil conformation. A compositionally biased stretch (low complexity) spans 479–497 (ATGSAASSRLPSVSSLASS). The tract at residues 479-510 (ATGSAASSRLPSVSSLASSMKTGSTGKGRTVS) is disordered.

Its subcellular location is the cytoplasm. It is found in the cytoskeleton. The protein localises to the microtubule organizing center. The protein resides in the centrosome. Required for centrosome duplication. Plays a central role in determining centrosome size. The protein is Spindle assembly abnormal protein 4 (sas-4) of Caenorhabditis briggsae.